Reading from the N-terminus, the 440-residue chain is MSEMTPREIVQELDKYIIGQDAAKRSVAIALRNRWRRMQVDEALQPEITPKNILMIGPTGVGKTEIARRLAKLARAPFIKIEATKFTEVGYVGRDVESIIRDLVDIAIKLVREEAMERVQHQAADAAEDRVLDIMLPRAQSFDQEDPSAGTRQKLRKKLREGALDDREIEVELRASPMGVEIMAPPGMEEMTNQLQQMFQNFGGEKTKRRKMKVKDALEVLKDEEAARLVNDEDLKAEAVERVEQNAIVFLDEIDKVCKRAEQGTGGDVSREGVQRDLLPLVEGSTVSTKHGMVRTDHILFIASGAFHLSKPSDLIPELQGRLPIRVELEALTTDDFVRILSEPSASLVHQYQALIATEGCELEFTEDGIRRVAEVAWEVNSRTENIGARRLHTVMERLLEEISYSAADRGGQQVTVDADYVDQHLGGLVQDEDLSRYIL.

ATP is bound by residues I18 and 60–65 (GVGKTE). The segment at 138–159 (RAQSFDQEDPSAGTRQKLRKKL) is disordered. ATP is bound by residues D252, E318, and R390.

This sequence belongs to the ClpX chaperone family. HslU subfamily. In terms of assembly, a double ring-shaped homohexamer of HslV is capped on each side by a ring-shaped HslU homohexamer. The assembly of the HslU/HslV complex is dependent on binding of ATP.

Its subcellular location is the cytoplasm. In terms of biological role, ATPase subunit of a proteasome-like degradation complex; this subunit has chaperone activity. The binding of ATP and its subsequent hydrolysis by HslU are essential for unfolding of protein substrates subsequently hydrolyzed by HslV. HslU recognizes the N-terminal part of its protein substrates and unfolds these before they are guided to HslV for hydrolysis. The protein is ATP-dependent protease ATPase subunit HslU of Alkalilimnicola ehrlichii (strain ATCC BAA-1101 / DSM 17681 / MLHE-1).